A 330-amino-acid polypeptide reads, in one-letter code: Lipoyl synthase (330 aa).

A disordered region spans residues 1–31 (MSDAPIATSSEVTQSPADYDPTKKQKSAEKT). The segment covering 7 to 16 (ATSSEVTQSP) has biased composition (polar residues). Residues 20-31 (DPTKKQKSAEKT) show a composition bias toward basic and acidic residues. Positions 77, 82, 88, 103, 107, 110, and 317 each coordinate [4Fe-4S] cluster. Residues 88-306 (CFGKGTATFM…EEEAYKMGFT (219 aa)) enclose the Radical SAM core domain.

It belongs to the radical SAM superfamily. Lipoyl synthase family. [4Fe-4S] cluster serves as cofactor.

It is found in the cytoplasm. It carries out the reaction [[Fe-S] cluster scaffold protein carrying a second [4Fe-4S](2+) cluster] + N(6)-octanoyl-L-lysyl-[protein] + 2 oxidized [2Fe-2S]-[ferredoxin] + 2 S-adenosyl-L-methionine + 4 H(+) = [[Fe-S] cluster scaffold protein] + N(6)-[(R)-dihydrolipoyl]-L-lysyl-[protein] + 4 Fe(3+) + 2 hydrogen sulfide + 2 5'-deoxyadenosine + 2 L-methionine + 2 reduced [2Fe-2S]-[ferredoxin]. It functions in the pathway protein modification; protein lipoylation via endogenous pathway; protein N(6)-(lipoyl)lysine from octanoyl-[acyl-carrier-protein]: step 2/2. Its function is as follows. Catalyzes the radical-mediated insertion of two sulfur atoms into the C-6 and C-8 positions of the octanoyl moiety bound to the lipoyl domains of lipoate-dependent enzymes, thereby converting the octanoylated domains into lipoylated derivatives. The sequence is that of Lipoyl synthase from Cupriavidus metallidurans (strain ATCC 43123 / DSM 2839 / NBRC 102507 / CH34) (Ralstonia metallidurans).